A 225-amino-acid polypeptide reads, in one-letter code: MRRGRAAAAPAPVTGEPNGSGGSKEIRFRGVRKRPWGRFAAEIRDPWKKTRVWLGTFDSAEDAARAYDAAARALRGPKAKTNFPLPYAHHHQFNQGHNPNNDPFVDSRFYPQDNPIISQRPTSSSMSSTVESFSGPRPPPAPRQQTTASSRKYTRSPPVVPDDCHSDCDSSSSVVDHGDCEKENDNDNDNIASSSFRKPLLFDLNLPPPMDDAGADDLHCTALCL.

The segment covering 1-12 (MRRGRAAAAPAP) has biased composition (low complexity). 2 disordered regions span residues 1–29 (MRRGRAAAAPAPVTGEPNGSGGSKEIRFR) and 82–193 (NFPL…NIAS). Residues 27-84 (RFRGVRKRPWGRFAAEIRDPWKKTRVWLGTFDSAEDAARAYDAAARALRGPKAKTNFP) constitute a DNA-binding region (AP2/ERF). The span at 118 to 134 (SQRPTSSSMSSTVESFS) shows a compositional bias: low complexity. Basic and acidic residues predominate over residues 176–185 (DHGDCEKEND). The short motif at 202 to 208 (FDLNLPP) is the EAR-like (transcriptional repression) element.

This sequence belongs to the ethylene-response factor family. Class 2 subfamily.

It localises to the nucleus. Transcription factor that binds to the GCC-box pathogenesis-related promoter element. Involved in the regulation of gene expression by stress factors and by components of stress signal transduction pathways. Probably acts as a transcriptional repressor and may regulate other AtERFs. In Nicotiana tabacum (Common tobacco), this protein is Ethylene-responsive transcription factor 3 (ERF3).